The primary structure comprises 519 residues: NADH-quinone oxidoreductase subunit N (519 aa).

14 helical membrane-spanning segments follow: residues 22–42, 53–73, 87–107, 141–161, 163–183, 198–218, 242–262, 287–307, 310–330, 336–356, 363–383, 406–426, 442–461, and 483–503; these read LLPM…EAFV, VLAL…TGLP, PTLF…LLIA, TEVF…PAAN, LITA…LAGM, YFLL…LVYG, IIVG…GVPF, VAAF…LAWD, PVIW…GITQ, LLAY…AATT, VLFY…IVIL, LVAG…PTSG, AGPL…YYYL, and GALA…LGIV.

The protein belongs to the complex I subunit 2 family. As to quaternary structure, NDH-1 is composed of 14 different subunits. Subunits NuoA, H, J, K, L, M, N constitute the membrane sector of the complex.

The protein resides in the cell membrane. The catalysed reaction is a quinone + NADH + 5 H(+)(in) = a quinol + NAD(+) + 4 H(+)(out). In terms of biological role, NDH-1 shuttles electrons from NADH, via FMN and iron-sulfur (Fe-S) centers, to quinones in the respiratory chain. The immediate electron acceptor for the enzyme in this species is believed to be a menaquinone. Couples the redox reaction to proton translocation (for every two electrons transferred, four hydrogen ions are translocated across the cytoplasmic membrane), and thus conserves the redox energy in a proton gradient. This is NADH-quinone oxidoreductase subunit N from Acidothermus cellulolyticus (strain ATCC 43068 / DSM 8971 / 11B).